The sequence spans 117 residues: Fluoride-specific ion channel FluC 2 (117 aa).

Helical transmembrane passes span 1-21 (MISI…RSAI) and 46-66 (FLIG…AFFV). The Na(+) site is built by glycine 71 and threonine 74. A helical transmembrane segment spans residues 95–115 (LFLNYSLLQFIIGFIACYIGY).

Belongs to the fluoride channel Fluc/FEX (TC 1.A.43) family.

It localises to the cell membrane. The enzyme catalyses fluoride(in) = fluoride(out). Na(+) is not transported, but it plays an essential structural role and its presence is essential for fluoride channel function. Fluoride-specific ion channel. Important for reducing fluoride concentration in the cell, thus reducing its toxicity. The protein is Fluoride-specific ion channel FluC 2 of Staphylococcus aureus (strain NCTC 8325 / PS 47).